The primary structure comprises 183 residues: MKKKIKEVIVVEGKDDISAVKNAVDAEVFQVNGHAVRKNKSIEILKLAYENKGLIILTDPDYAGEEIRKYLCKHFPNAKNAYISRVSGTKDGDIGVENASPEDIITALEKARFSLDNSVNIFNLDLMMDYNLIGKDNSADLRSLLGAELGIGYSNGKQFMAKLNRYGISLEEFKKAYEKINMK.

Residues 6–90 (KEVIVVEGKD…AYISRVSGTK (85 aa)) form the Toprim domain. Positions 12, 59, and 61 each coordinate Mg(2+).

Belongs to the ribonuclease M5 family. Requires Mg(2+) as cofactor.

It localises to the cytoplasm. The catalysed reaction is Endonucleolytic cleavage of RNA, removing 21 and 42 nucleotides, respectively, from the 5'- and 3'-termini of a 5S-rRNA precursor.. Required for correct processing of both the 5' and 3' ends of 5S rRNA precursor. Cleaves both sides of a double-stranded region yielding mature 5S rRNA in one step. This chain is Ribonuclease M5, found in Fusobacterium nucleatum subsp. nucleatum (strain ATCC 25586 / DSM 15643 / BCRC 10681 / CIP 101130 / JCM 8532 / KCTC 2640 / LMG 13131 / VPI 4355).